The chain runs to 471 residues: V-type ATP synthase beta chain (471 aa).

The protein belongs to the ATPase alpha/beta chains family.

Its function is as follows. Produces ATP from ADP in the presence of a proton gradient across the membrane. The V-type beta chain is a regulatory subunit. The sequence is that of V-type ATP synthase beta chain from Deinococcus deserti (strain DSM 17065 / CIP 109153 / LMG 22923 / VCD115).